The chain runs to 334 residues: Meso-diaminopimelate D-dehydrogenase (334 aa).

NADP(+) contacts are provided by residues 16 to 19 (YGNL), 40 to 42 (TRR), 75 to 78 (CSGS), 98 to 100 (GFD), and 127 to 131 (CGWDP). Substrate contacts are provided by residues D100, D130, W154, 160 to 161 (QG), T179, R205, H255, and N284.

The protein belongs to the diaminopimelate dehydrogenase family. In terms of assembly, homodimer.

The catalysed reaction is meso-2,6-diaminopimelate + NADP(+) + H2O = (S)-2-amino-6-oxoheptanedioate + NH4(+) + NADPH + H(+). The protein operates within amino-acid biosynthesis; L-lysine biosynthesis via DAP pathway; DL-2,6-diaminopimelate from (S)-tetrahydrodipicolinate: step 1/1. In terms of biological role, catalyzes the reversible NADPH-dependent reductive amination of L-2-amino-6-oxopimelate, the acyclic form of L-tetrahydrodipicolinate, to generate the meso compound, D,L-2,6-diaminopimelate. Probably plays a role in lysine biosynthesis. Exhibits a high substrate specificity for meso-2,6-diaminopimelate (m-DAP), since the activity with L,L-2,6-diaminopimelate is less than 5% of the activity observed with m-DAP. Can use NAD(+) only very poorly since the activity observed in the presence of NAD(+) is about 0.3% of that with NADP(+). This Acetivibrio thermocellus (strain ATCC 27405 / DSM 1237 / JCM 9322 / NBRC 103400 / NCIMB 10682 / NRRL B-4536 / VPI 7372) (Clostridium thermocellum) protein is Meso-diaminopimelate D-dehydrogenase (ddh).